The chain runs to 826 residues: Periplasmic nitrate reductase (826 aa).

Residues 1–32 constitute a signal peptide (tat-type signal); sequence MSISRREFLKANAAVAAATAVGATLPVKIVEA. Positions 39-95 constitute a 4Fe-4S Mo/W bis-MGD-type domain; it reads IKWDKAPCRFCGVGCSVLVGTDNGKVVATKGDPESPVNKGLNCIKGYFLSKIMYGKD. Cys46, Cys49, Cys53, and Cys81 together coordinate [4Fe-4S] cluster. Mo-bis(molybdopterin guanine dinucleotide) is bound by residues Lys83, Gln150, Asn175, Cys179, 212–219, 262–264, Met372, Gln376, Asn482, 508–509, Lys531, Asp558, and 716–725; these read WGANMAEM, QSD, SD, and TGRVLEHWHT. Phe792 serves as a coordination point for substrate. Asn800 and Lys817 together coordinate Mo-bis(molybdopterin guanine dinucleotide).

It belongs to the prokaryotic molybdopterin-containing oxidoreductase family. NasA/NapA/NarB subfamily. Component of the periplasmic nitrate reductase NapAB complex composed of NapA and NapB. [4Fe-4S] cluster serves as cofactor. It depends on Mo-bis(molybdopterin guanine dinucleotide) as a cofactor. Predicted to be exported by the Tat system. The position of the signal peptide cleavage has not been experimentally proven.

The protein resides in the periplasm. The enzyme catalyses 2 Fe(II)-[cytochrome] + nitrate + 2 H(+) = 2 Fe(III)-[cytochrome] + nitrite + H2O. Functionally, catalytic subunit of the periplasmic nitrate reductase complex NapAB. Receives electrons from NapB and catalyzes the reduction of nitrate to nitrite. The protein is Periplasmic nitrate reductase of Shewanella halifaxensis (strain HAW-EB4).